The chain runs to 140 residues: Pro-variola growth factor (140 aa).

Residues 1–18 (MSMKYLMLLFAAMIIRSF) form the signal peptide. The Extracellular segment spans residues 19 to 100 (ANSGNAIETT…SEKPNTTTSY (82 aa)). Asparagine 34 is a glycosylation site (N-linked (GlcNAc...) asparagine; by host). The EGF-like domain maps to 41–81 (AIRLCGPEGNGYCFHGICIHARDIDGMYCRCSHGYTGIRCQ). 3 cysteine pairs are disulfide-bonded: cysteine 45–cysteine 58, cysteine 53–cysteine 69, and cysteine 71–cysteine 80. Asparagine 95 carries an N-linked (GlcNAc...) asparagine; by host glycan. A helical transmembrane segment spans residues 101–121 (IPSPGIVLVLLVSIIMCCLLF). Residues 122–140 (VYRFTRRTNKLPLQDMVVP) are Cytoplasmic-facing.

The protein belongs to the orthopoxvirus OPG019 family. In terms of assembly, variola growth factor interacts with host EGFR and promotes EGFR dimerization.

It is found in the host membrane. The protein localises to the secreted. Functionally, stimulates cellular proliferation (hyperplasia)and mobility around infected cells to promote rapid and efficient spread of infection. This effect is beneficial for virus replication in vivo, because poxviruses replicate possibly better in proliferating cells than in quiescent cells. Acts by binding host EGFR, inducing its dimerization, autophosphorylation and leading to activation of several cellular pathways regulating cell proliferation or cell survival. The activation by host EGFR of mitogen activated protein kinases (MAPK) and extracellular-signal regulated kinases (ERK) are essential for the positive effect of vaccinia growth factor on poxvirus virulence in vivo. The sequence is that of Pro-variola growth factor (OPG019) from Variola virus.